A 201-amino-acid polypeptide reads, in one-letter code: Recombination protein RecR (201 aa).

The C4-type zinc finger occupies 57 to 72 (CQQCRNFTEEALCEIC). The Toprim domain maps to 81–176 (TTLCIVETPG…NISRIAHGVP (96 aa)).

It belongs to the RecR family.

Functionally, may play a role in DNA repair. It seems to be involved in an RecBC-independent recombinational process of DNA repair. It may act with RecF and RecO. In Colwellia psychrerythraea (strain 34H / ATCC BAA-681) (Vibrio psychroerythus), this protein is Recombination protein RecR.